Consider the following 415-residue polypeptide: Probable G-protein coupled receptor 19 (415 aa).

The Extracellular portion of the chain corresponds to 1–69 (MVFAHRMDNS…LKPGEVATAS (69 aa)). 2 N-linked (GlcNAc...) asparagine glycosylation sites follow: Asn-25 and Asn-52. Residues 70–90 (IFFGILWLFSIFGNSLVCLVI) traverse the membrane as a helical segment. Topologically, residues 91–102 (HRSRRTQSTTNY) are cytoplasmic. Residues 103 to 123 (FVVSMACADLLISVASTPFVL) form a helical membrane-spanning segment. Topologically, residues 124–143 (LQFTTGRWTLGSATCKVVRY) are extracellular. Residues Cys-138 and Cys-210 are joined by a disulfide bond. The helical transmembrane segment at 144–161 (FQYLTPGVQIYVLLSICI) threads the bilayer. Over 162–182 (DRFYTIVYPLSFKVSREKAKK) the chain is Cytoplasmic. A helical membrane pass occupies residues 183–203 (MIAASWVFDAGFVTPVLFFYG). Residues 204-221 (SNWDSHCNYFLPSSWEGT) lie on the Extracellular side of the membrane. Residues 222–242 (AYTVIHFLVGFVIPSVLIILF) traverse the membrane as a helical segment. The Cytoplasmic portion of the chain corresponds to 243-277 (YQKVIKYIWRIGTDGRTVRRTMNIVPRTKVKTIKM). A helical transmembrane segment spans residues 278–298 (FLILNLLFLLSWLPFHVAQLW). Residues 299–309 (HPHEQDYKKSS) lie on the Extracellular side of the membrane. Residues 310–325 (LVFTAITWISFSSSAS) traverse the membrane as a helical segment. Residues 326 to 415 (KPTLYSIYNA…INSNPPNTFV (90 aa)) are Cytoplasmic-facing.

It belongs to the G-protein coupled receptor 1 family. As to expression, abundant expression in the brain.

The protein localises to the cell membrane. G-protein coupled receptor that plays a role in the regulation of circadian rhythms and energy metabolism. Participates in maintaining proper circadian gene expression in the suprachiasmatic nucleus (SCN), the locus of the master circadian clock in the brain. May function as a coordinator of aging-associated metabolic dysfunction, stress response, DNA integrity management, and eventual senescence. Upon binding to adropin, modulates mitochondrial energy metabolism via the p44/42-PDK4 signaling pathway, influencing pyruvate dehydrogenase activity. The polypeptide is Probable G-protein coupled receptor 19 (GPR19) (Homo sapiens (Human)).